Consider the following 88-residue polypeptide: Small ribosomal subunit protein uS17 (88 aa).

This sequence belongs to the universal ribosomal protein uS17 family. Part of the 30S ribosomal subunit.

Its function is as follows. One of the primary rRNA binding proteins, it binds specifically to the 5'-end of 16S ribosomal RNA. This chain is Small ribosomal subunit protein uS17, found in Pseudomonas fluorescens (strain ATCC BAA-477 / NRRL B-23932 / Pf-5).